Consider the following 260-residue polypeptide: Lipid II isoglutaminyl synthase (glutamine-hydrolyzing) subunit GatD (260 aa).

One can recognise a GATase cobBQ-type domain in the interval 16-214; the sequence is QLNIAHLYGN…FHGPILSRNA (199 aa). C107 (nucleophile) is an active-site residue. A substrate-binding site is contributed by R142. H206 is an active-site residue.

It belongs to the CobB/CobQ family. GatD subfamily. Forms a heterodimer with MurT.

The catalysed reaction is beta-D-GlcNAc-(1-&gt;4)-Mur2Ac(oyl-L-Ala-gamma-D-Glu-L-Lys-D-Ala-D-Ala)-di-trans,octa-cis-undecaprenyl diphosphate + L-glutamine + ATP + H2O = beta-D-GlcNAc-(1-&gt;4)-Mur2Ac(oyl-L-Ala-D-isoglutaminyl-L-Lys-D-Ala-D-Ala)-di-trans,octa-cis-undecaprenyl diphosphate + L-glutamate + ADP + phosphate + H(+). It carries out the reaction L-glutamine + H2O = L-glutamate + NH4(+). The protein operates within cell wall biogenesis; peptidoglycan biosynthesis. Functionally, the lipid II isoglutaminyl synthase complex catalyzes the formation of alpha-D-isoglutamine in the cell wall lipid II stem peptide. The GatD subunit catalyzes the hydrolysis of glutamine to glutamate and ammonia. The resulting ammonia molecule is channeled to the active site of MurT. In Streptococcus pneumoniae (strain ATCC BAA-255 / R6), this protein is Lipid II isoglutaminyl synthase (glutamine-hydrolyzing) subunit GatD.